The following is a 167-amino-acid chain: Small ribosomal subunit protein uS5 (167 aa).

The S5 DRBM domain maps to 12 to 75; sequence LQEKLITVNR…EKARRNMVTI (64 aa).

The protein belongs to the universal ribosomal protein uS5 family. As to quaternary structure, part of the 30S ribosomal subunit. Contacts proteins S4 and S8.

Its function is as follows. With S4 and S12 plays an important role in translational accuracy. Functionally, located at the back of the 30S subunit body where it stabilizes the conformation of the head with respect to the body. This chain is Small ribosomal subunit protein uS5, found in Buchnera aphidicola subsp. Schizaphis graminum (strain Sg).